A 511-amino-acid polypeptide reads, in one-letter code: ATP synthase subunit alpha 1 (511 aa).

170–177 (GDRQTGKT) provides a ligand contact to ATP.

Belongs to the ATPase alpha/beta chains family. As to quaternary structure, F-type ATPases have 2 components, CF(1) - the catalytic core - and CF(0) - the membrane proton channel. CF(1) has five subunits: alpha(3), beta(3), gamma(1), delta(1), epsilon(1). CF(0) has three main subunits: a(1), b(2) and c(9-12). The alpha and beta chains form an alternating ring which encloses part of the gamma chain. CF(1) is attached to CF(0) by a central stalk formed by the gamma and epsilon chains, while a peripheral stalk is formed by the delta and b chains.

Its subcellular location is the cell inner membrane. The enzyme catalyses ATP + H2O + 4 H(+)(in) = ADP + phosphate + 5 H(+)(out). Produces ATP from ADP in the presence of a proton gradient across the membrane. The alpha chain is a regulatory subunit. The chain is ATP synthase subunit alpha 1 from Gluconobacter oxydans (strain 621H) (Gluconobacter suboxydans).